We begin with the raw amino-acid sequence, 268 residues long: Ribosomal RNA small subunit methyltransferase A (268 aa).

Positions 18, 20, 45, 66, 91, and 112 each coordinate S-adenosyl-L-methionine.

This sequence belongs to the class I-like SAM-binding methyltransferase superfamily. rRNA adenine N(6)-methyltransferase family. RsmA subfamily.

The protein localises to the cytoplasm. The enzyme catalyses adenosine(1518)/adenosine(1519) in 16S rRNA + 4 S-adenosyl-L-methionine = N(6)-dimethyladenosine(1518)/N(6)-dimethyladenosine(1519) in 16S rRNA + 4 S-adenosyl-L-homocysteine + 4 H(+). Specifically dimethylates two adjacent adenosines (A1518 and A1519) in the loop of a conserved hairpin near the 3'-end of 16S rRNA in the 30S particle. May play a critical role in biogenesis of 30S subunits. The protein is Ribosomal RNA small subunit methyltransferase A of Shewanella oneidensis (strain ATCC 700550 / JCM 31522 / CIP 106686 / LMG 19005 / NCIMB 14063 / MR-1).